The sequence spans 395 residues: Protein maternal effect lethal 26 (395 aa).

The 122-residue stretch at 41 to 162 (KVQHTWTVKN…RDMIIVNVEI (122 aa)) folds into the MATH domain. Residues 201 to 269 (CDFAINVNGK…IYCGRCNKDI (69 aa)) enclose the BTB domain.

In terms of assembly, interacts (via BTB domain) with cul-3. Seems to be a component of a E3 ubiquitin-protein ligase complex containing cul-3. Interacts (probably via MATH domain) with mei-1, which targets mei-1 for ubiquitin-mediated proteolysis. Interacts (probably via MATH domain) with ppfr-1, the regulatory subunit of the PP4 complex; targets ppfr-1 for ubiquitin-mediated proteolysis. May interact (via MATH domain) with unc-89 (via Ig-like C2-type domain 2/3 and, Ig-like C2-type domain 50 and fibronectin type-III domain 2). As to expression, expressed in body wall muscles.

The protein resides in the cytoplasm. It is found in the myofibril. The protein localises to the sarcomere. Its subcellular location is the m line. It localises to the i band. The protein operates within protein modification; protein ubiquitination. Functionally, probable substrate-specific adapter of an E3 ubiquitin-protein ligase complex which mediates the ubiquitination and subsequent proteasomal degradation of target proteins. Controls degradation of microtubule severing protein mei-1 after meiosis. Controls degradation of ppfr-1, the regulatory subunit of PP4 complex, after meiosis. In body wall muscles, involved in the organization of myosin thick filaments, likely by regulating the degradation of mei-1 downstream of unc-89. May also activate the TORC1 pathway. In Caenorhabditis elegans, this protein is Protein maternal effect lethal 26 (mel-26).